A 620-amino-acid chain; its full sequence is UvrABC system protein C (620 aa).

The region spanning 13 to 92 (DKPGVYIMKN…IKKYSPRYNI (80 aa)) is the GIY-YIG domain. The 36-residue stretch at 204 to 239 (TSIIKNLKLEMEKAAEELEFEKAAKIRDRILAIELI) folds into the UVR domain.

This sequence belongs to the UvrC family. As to quaternary structure, interacts with UvrB in an incision complex.

The protein resides in the cytoplasm. Its function is as follows. The UvrABC repair system catalyzes the recognition and processing of DNA lesions. UvrC both incises the 5' and 3' sides of the lesion. The N-terminal half is responsible for the 3' incision and the C-terminal half is responsible for the 5' incision. This chain is UvrABC system protein C, found in Clostridium perfringens (strain SM101 / Type A).